The sequence spans 219 residues: KP6 killer toxin (219 aa).

A signal peptide spans M1 to A19. The propeptide occupies L20–R27. 4 disulfide bridges follow: C32–C39, C43–C101, C45–C92, and C62–C78. N98 is a glycosylation site (N-linked (GlcNAc...) asparagine; by host). A propeptide spanning residues K106 to R138 is cleaved from the precursor. A disordered region spans residues G120–P142.

As to quaternary structure, heterodimer of two small polypeptides that are not covalently linked.

The protein resides in the secreted. Functionally, this protein is lethal to sensitive cells of the same or related species. The KP6 alpha subunit is known to recognize some cellular receptors before interaction of the complex with KP6 beta, precipitating cell death. The protein is KP6 killer toxin of Ustilago maydis P6 virus (UmV6).